The following is a 345-amino-acid chain: Short-wave-sensitive opsin 1 (345 aa).

Residues 1–30 (MSEEEFYLFKNISSVGPWDGPQYHIAPVWA) lie on the Extracellular side of the membrane. Asparagine 11 is a glycosylation site (N-linked (GlcNAc...) asparagine). The chain crosses the membrane as a helical span at residues 31–55 (FYLQAAFMGTVFLIGFPLNAMVLVA). The Cytoplasmic portion of the chain corresponds to 56–67 (TLRYKKLRQPLN). Residues 68 to 93 (YILVNVSFGGFLLCIFSVFPVFVASC) traverse the membrane as a helical segment. Residues 94–107 (NGYFVFGRHVCALE) are Extracellular-facing. Cysteine 104 and cysteine 181 are disulfide-bonded. The helical transmembrane segment at 108 to 127 (GFLGTVAGLVTGWSLAFLAF) threads the bilayer. The Cytoplasmic portion of the chain corresponds to 128–146 (ERYIVICKPFGNFRFSSKH). The helical transmembrane segment at 147 to 170 (ALTVVLATWTIGIGVSIPPFFGWS) threads the bilayer. Residues 171-196 (RFIPEGLQCSCGPDWYTVGTKYRSES) lie on the Extracellular side of the membrane. Residues 197–224 (YTWFLFIFCFIVPLSLICFSYTQLLRAL) traverse the membrane as a helical segment. Residues 225 to 246 (KAVAAQQQESATTQKAEREVSR) lie on the Cytoplasmic side of the membrane. The chain crosses the membrane as a helical span at residues 247 to 270 (MVVVMVGSFCVCYVPYAAFAMYMV). Topologically, residues 271–278 (NNRNHGLD) are extracellular. The helical transmembrane segment at 279-303 (LRLVTIPSFFSKSACIYNPIIYCFM) threads the bilayer. At lysine 290 the chain carries N6-(retinylidene)lysine. Over 304-345 (NKQFQACIMKMVCGKAMTDESDTCSSQKTEVSTVSSTQVGPN) the chain is Cytoplasmic.

Belongs to the G-protein coupled receptor 1 family. Opsin subfamily. In terms of processing, phosphorylated on some or all of the serine and threonine residues present in the C-terminal region. The three color pigments are found in the cone photoreceptor cells. Expressed throughout the epidermis and dermis, primarily in the stratum granulosum in the facial and abdominal skin (at protein level). Expressed in dermal fibroblasts (at protein level). Expressed in melanocytes (at protein level).

The protein resides in the cell membrane. It localises to the photoreceptor inner segment. It is found in the cell projection. Its subcellular location is the cilium. The protein localises to the photoreceptor outer segment. The protein resides in the cytoplasm. It localises to the perinuclear region. In terms of biological role, visual pigments are the light-absorbing molecules that mediate vision. They consist of an apoprotein, opsin, covalently linked to cis-retinal. Required for the maintenance of cone outer segment organization in the ventral retina, but not essential for the maintenance of functioning cone photoreceptors. Involved in ensuring correct abundance and localization of retinal membrane proteins. May increase spectral sensitivity in dim light. The sequence is that of Short-wave-sensitive opsin 1 (OPN1SW) from Homo sapiens (Human).